A 632-amino-acid polypeptide reads, in one-letter code: SH2B adapter protein 2 (632 aa).

Phosphotyrosine is present on tyrosine 52. At serine 141 the chain carries Phosphoserine. The 114-residue stretch at 193–306 (DIQREGALRF…WVADIQGCVD (114 aa)) folds into the PH domain. Serine 310 is modified (phosphoserine). The interval 381–409 (TLESPGGSGSDSNNTGEQGAETDPEAEPE) is disordered. Over residues 400–409 (AETDPEAEPE) the composition is skewed to acidic residues. The SH2 domain maps to 417–515 (WFHGTLSRVK…SADITLRSYV (99 aa)). Disordered regions lie at residues 516–537 (RAQD…SPAC) and 558–632 (ASPS…YSFY). A compositionally biased stretch (pro residues) spans 519 to 532 (DPPPEPGPTPPAAP). Low complexity-rich tracts occupy residues 558–579 (ASPS…AASG) and 604–626 (EAVA…RAVE). Residue tyrosine 629 is modified to Phosphotyrosine.

The protein belongs to the SH2B adapter family. In terms of assembly, homodimer. Interacts with KIT/c-KIT, SHC1, EPOR, PDGFR, VAV1 and VAV3. Interacts (via N-terminal region) with SHC1. Interacts (via the phosphorylated C-terminus) with GRB2. Interacts (via its SH2 domain) with EPOR, INSR and KIT. Interacts with GRB2 after B-cell antigen receptor stimulation. Interacts (via PH domain) with VAV3. Interacts with NTRK1, NTRK2 and NTRK3 (phosphorylated); after stimulation of the receptor by its extracellular ligand and subsequent autophosphorylation of the receptor. Binds INSR, GRB2, ASB6 and CAP. Insulin stimulation leads to dissociation of CAP. Binds CBS only when SH2B2/APS has become phosphorylated. INSR binding does not depend on the phosphorylation of SH2B2/APS. Post-translationally, tyrosine phosphorylated by JAK2, KIT and other kinases activated by B-cell receptor in response to stimulation with cytokines, IL3, IL5, PDGF, IGF1, IGF2, CSF2/GM-CSF and cross-linking of the B-cell receptor complex. In terms of tissue distribution, expressed in spleen, prostate, testis, uterus, small intestine and skeletal muscle. Among hematopoietic cell lines, expressed exclusively in B-cells. Not expressed in most tumor cell lines.

The protein resides in the cytoplasm. It localises to the cell membrane. Its function is as follows. Adapter protein for several members of the tyrosine kinase receptor family. Involved in multiple signaling pathways. May be involved in coupling from immunoreceptor to Ras signaling. Acts as a negative regulator of cytokine signaling in collaboration with CBL. Binds to EPOR and suppresses EPO-induced STAT5 activation, possibly through a masking effect on STAT5 docking sites in EPOR. Suppresses PDGF-induced mitogenesis. May induce cytoskeletal reorganization via interaction with VAV3. The protein is SH2B adapter protein 2 (SH2B2) of Homo sapiens (Human).